Consider the following 121-residue polypeptide: NADH-quinone oxidoreductase subunit A 2 (121 aa).

3 helical membrane-spanning segments follow: residues 6–26, 60–80, and 89–109; these read FLPV…TLFV, VPFF…MFLF, and IGFV…VGFA.

This sequence belongs to the complex I subunit 3 family. NDH-1 is composed of 14 different subunits. Subunits NuoA, H, J, K, L, M, N constitute the membrane sector of the complex.

Its subcellular location is the cell inner membrane. The enzyme catalyses a quinone + NADH + 5 H(+)(in) = a quinol + NAD(+) + 4 H(+)(out). Its function is as follows. NDH-1 shuttles electrons from NADH, via FMN and iron-sulfur (Fe-S) centers, to quinones in the respiratory chain. The immediate electron acceptor for the enzyme in this species is believed to be ubiquinone. Couples the redox reaction to proton translocation (for every two electrons transferred, four hydrogen ions are translocated across the cytoplasmic membrane), and thus conserves the redox energy in a proton gradient. In Rhizobium meliloti (strain 1021) (Ensifer meliloti), this protein is NADH-quinone oxidoreductase subunit A 2.